The chain runs to 597 residues: Probable translation initiation factor IF-2 (597 aa).

One can recognise a tr-type G domain in the interval 8 to 225 (LRQPIVVVLG…LLAGLTQQYL (218 aa)). A G1 region spans residues 17–24 (GHVDHGKT). GTP is bound at residue 17–24 (GHVDHGKT). Positions 42–46 (EMTQE) are G2. The tract at residues 81 to 84 (DTPG) is G3. GTP is bound by residues 81–85 (DTPGH) and 135–138 (NKID). The segment at 135-138 (NKID) is G4. Positions 203–205 (SGK) are G5.

The protein belongs to the TRAFAC class translation factor GTPase superfamily. Classic translation factor GTPase family. IF-2 subfamily.

In terms of biological role, function in general translation initiation by promoting the binding of the formylmethionine-tRNA to ribosomes. Seems to function along with eIF-2. The chain is Probable translation initiation factor IF-2 from Metallosphaera sedula (strain ATCC 51363 / DSM 5348 / JCM 9185 / NBRC 15509 / TH2).